We begin with the raw amino-acid sequence, 248 residues long: Deoxyribose-phosphate aldolase (248 aa).

Aspartate 117 serves as the catalytic Proton donor/acceptor. Lysine 179 (schiff-base intermediate with acetaldehyde) is an active-site residue. Residue lysine 208 is the Proton donor/acceptor of the active site.

The protein belongs to the DeoC/FbaB aldolase family. DeoC type 1 subfamily.

It is found in the cytoplasm. The enzyme catalyses 2-deoxy-D-ribose 5-phosphate = D-glyceraldehyde 3-phosphate + acetaldehyde. It participates in carbohydrate degradation; 2-deoxy-D-ribose 1-phosphate degradation; D-glyceraldehyde 3-phosphate and acetaldehyde from 2-deoxy-alpha-D-ribose 1-phosphate: step 2/2. Functionally, catalyzes a reversible aldol reaction between acetaldehyde and D-glyceraldehyde 3-phosphate to generate 2-deoxy-D-ribose 5-phosphate. The polypeptide is Deoxyribose-phosphate aldolase (Thermotoga petrophila (strain ATCC BAA-488 / DSM 13995 / JCM 10881 / RKU-1)).